The primary structure comprises 439 residues: Adenylosuccinate synthetase (439 aa).

GTP contacts are provided by residues 12–18 and 40–42; these read GDEGKGK and GHT. The active-site Proton acceptor is the D13. Residues D13 and G40 each coordinate Mg(2+). Residues 13-16, 38-41, T137, R151, Q232, T247, and R311 each bind IMP; these read DEGK and NAGH. Residue H41 is the Proton donor of the active site. Position 307 to 313 (307 to 313) interacts with substrate; the sequence is ATTGRPR. GTP-binding positions include R313, 339–341, and 421–423; these read KLD and SNG.

It belongs to the adenylosuccinate synthetase family. As to quaternary structure, homodimer. Mg(2+) serves as cofactor.

It is found in the cytoplasm. The catalysed reaction is IMP + L-aspartate + GTP = N(6)-(1,2-dicarboxyethyl)-AMP + GDP + phosphate + 2 H(+). It functions in the pathway purine metabolism; AMP biosynthesis via de novo pathway; AMP from IMP: step 1/2. Plays an important role in the de novo pathway of purine nucleotide biosynthesis. Catalyzes the first committed step in the biosynthesis of AMP from IMP. The chain is Adenylosuccinate synthetase from Salinibacter ruber (strain DSM 13855 / M31).